The sequence spans 71 residues: Small ribosomal subunit protein bS21 (71 aa).

Residues 48–59 (KAAAAVKRHAKK) show a composition bias toward basic residues. The interval 48–71 (KAAAAVKRHAKKVQRENRKFQRLY) is disordered. Positions 60-71 (VQRENRKFQRLY) are enriched in basic and acidic residues.

Belongs to the bacterial ribosomal protein bS21 family.

This Saccharophagus degradans (strain 2-40 / ATCC 43961 / DSM 17024) protein is Small ribosomal subunit protein bS21.